A 124-amino-acid chain; its full sequence is Small ribosomal subunit protein uS12 (124 aa).

Asp89 is subject to 3-methylthioaspartic acid. The disordered stretch occupies residues 105-124; sequence QGVKNRKQARSRYGAKKEKS. Residues 108–118 are compositionally biased toward basic residues; the sequence is KNRKQARSRYG.

This sequence belongs to the universal ribosomal protein uS12 family. In terms of assembly, part of the 30S ribosomal subunit. Contacts proteins S8 and S17. May interact with IF1 in the 30S initiation complex.

Its function is as follows. With S4 and S5 plays an important role in translational accuracy. Functionally, interacts with and stabilizes bases of the 16S rRNA that are involved in tRNA selection in the A site and with the mRNA backbone. Located at the interface of the 30S and 50S subunits, it traverses the body of the 30S subunit contacting proteins on the other side and probably holding the rRNA structure together. The combined cluster of proteins S8, S12 and S17 appears to hold together the shoulder and platform of the 30S subunit. The polypeptide is Small ribosomal subunit protein uS12 (Mycobacteroides abscessus (strain ATCC 19977 / DSM 44196 / CCUG 20993 / CIP 104536 / JCM 13569 / NCTC 13031 / TMC 1543 / L948) (Mycobacterium abscessus)).